Consider the following 733-residue polypeptide: Photosystem I P700 chlorophyll a apoprotein A2 (733 aa).

Helical transmembrane passes span 46–69 (IFAS…FHVA), 134–157 (LYLG…LHLQ), 174–198 (LNHH…HVAL), 272–290 (IAHH…GHMY), 329–352 (LHIQ…QHMY), 368–394 (AALY…IFFV), 416–438 (AIIS…LYIH), and 516–534 (FLVH…LILV). [4Fe-4S] cluster is bound by residues cysteine 558 and cysteine 567. 2 helical membrane passes run 574 to 595 (AFYL…YWHW) and 642 to 664 (LSVW…MFLI). Chlorophyll a contacts are provided by histidine 653, methionine 661, and tyrosine 669. Residue tryptophan 670 coordinates phylloquinone. The chain crosses the membrane as a helical span at residues 706–726 (LVGLVHFAVGYILTYAAFVIA).

It belongs to the PsaA/PsaB family. The PsaA/B heterodimer binds the P700 chlorophyll special pair and subsequent electron acceptors. PSI consists of a core antenna complex that captures photons, and an electron transfer chain that converts photonic excitation into a charge separation. The eukaryotic PSI reaction center is composed of at least 11 subunits. P700 is a chlorophyll a/chlorophyll a' dimer, A0 is one or more chlorophyll a, A1 is one or both phylloquinones and FX is a shared 4Fe-4S iron-sulfur center. is required as a cofactor.

The protein localises to the plastid. The protein resides in the chloroplast thylakoid membrane. It catalyses the reaction reduced [plastocyanin] + hnu + oxidized [2Fe-2S]-[ferredoxin] = oxidized [plastocyanin] + reduced [2Fe-2S]-[ferredoxin]. Functionally, psaA and PsaB bind P700, the primary electron donor of photosystem I (PSI), as well as the electron acceptors A0, A1 and FX. PSI is a plastocyanin/cytochrome c6-ferredoxin oxidoreductase, converting photonic excitation into a charge separation, which transfers an electron from the donor P700 chlorophyll pair to the spectroscopically characterized acceptors A0, A1, FX, FA and FB in turn. Oxidized P700 is reduced on the lumenal side of the thylakoid membrane by plastocyanin or cytochrome c6. The polypeptide is Photosystem I P700 chlorophyll a apoprotein A2 (Trieres chinensis (Marine centric diatom)).